The following is a 335-amino-acid chain: Glyceraldehyde-3-phosphate dehydrogenase (335 aa).

NAD(+) contacts are provided by residues 10-11 (RI), D33, R77, and S119. D-glyceraldehyde 3-phosphate-binding positions include 150–152 (SCT), T181, 210–211 (TG), and R233. C151 serves as the catalytic Nucleophile. N315 contacts NAD(+).

Belongs to the glyceraldehyde-3-phosphate dehydrogenase family. As to quaternary structure, homotetramer.

It localises to the cytoplasm. The catalysed reaction is D-glyceraldehyde 3-phosphate + phosphate + NAD(+) = (2R)-3-phospho-glyceroyl phosphate + NADH + H(+). It functions in the pathway carbohydrate degradation; glycolysis; pyruvate from D-glyceraldehyde 3-phosphate: step 1/5. Catalyzes the oxidative phosphorylation of glyceraldehyde 3-phosphate (G3P) to 1,3-bisphosphoglycerate (BPG) using the cofactor NAD. The first reaction step involves the formation of a hemiacetal intermediate between G3P and a cysteine residue, and this hemiacetal intermediate is then oxidized to a thioester, with concomitant reduction of NAD to NADH. The reduced NADH is then exchanged with the second NAD, and the thioester is attacked by a nucleophilic inorganic phosphate to produce BPG. The protein is Glyceraldehyde-3-phosphate dehydrogenase (gap) of Chlamydia pneumoniae (Chlamydophila pneumoniae).